The chain runs to 105 residues: Small ribosomal subunit protein uS10 (105 aa).

Belongs to the universal ribosomal protein uS10 family. Part of the 30S ribosomal subunit.

Functionally, involved in the binding of tRNA to the ribosomes. This Arthrospira platensis (Spirulina platensis) protein is Small ribosomal subunit protein uS10.